Consider the following 487-residue polypeptide: N-succinylglutamate 5-semialdehyde dehydrogenase (487 aa).

An NAD(+)-binding site is contributed by 221–226 (GSSDTG). Active-site residues include Glu-244 and Cys-278.

The protein belongs to the aldehyde dehydrogenase family. AstD subfamily.

The enzyme catalyses N-succinyl-L-glutamate 5-semialdehyde + NAD(+) + H2O = N-succinyl-L-glutamate + NADH + 2 H(+). Its pathway is amino-acid degradation; L-arginine degradation via AST pathway; L-glutamate and succinate from L-arginine: step 4/5. Catalyzes the NAD-dependent reduction of succinylglutamate semialdehyde into succinylglutamate. In Burkholderia multivorans (strain ATCC 17616 / 249), this protein is N-succinylglutamate 5-semialdehyde dehydrogenase.